Here is a 747-residue protein sequence, read N- to C-terminus: UPF0313 protein PA4928 (747 aa).

A Radical SAM core domain is found at 371-640; that stretch reads AYEMIRFSVN…KSDQQRRLHK (270 aa). [4Fe-4S] cluster-binding residues include C385, C389, and C392. Positions 670–747 are disordered; sequence GKHHLVPTYQ…KKSRQPNIPR (78 aa).

Belongs to the UPF0313 family. The cofactor is [4Fe-4S] cluster.

The chain is UPF0313 protein PA4928 from Pseudomonas aeruginosa (strain ATCC 15692 / DSM 22644 / CIP 104116 / JCM 14847 / LMG 12228 / 1C / PRS 101 / PAO1).